The primary structure comprises 312 residues: Pyridoxal kinase (312 aa).

Position 1 is an N-acetylmethionine (methionine 1). Serine 12 and threonine 47 together coordinate pyridoxal. Position 47 (threonine 47) interacts with pyridoxal 5'-phosphate. Serine 59 is subject to Phosphoserine. Residue aspartate 113 participates in ATP binding. Aspartate 113 contacts Na(+). Residue aspartate 118 participates in Mg(2+) binding. Threonine 148 lines the Na(+) pocket. Position 150–153 (asparagine 150–glutamate 153) interacts with ATP. Serine 164 bears the Phosphoserine mark. Na(+) is bound at residue threonine 186. Threonine 186–serine 187 lines the ATP pocket. A Phosphoserine modification is found at serine 213. ATP is bound by residues valine 226–proline 228 and threonine 233. Glycine 234–aspartate 235 is a pyridoxal 5'-phosphate binding site. Aspartate 235 (proton acceptor) is an active-site residue. Serine 285 is subject to Phosphoserine.

The protein belongs to the pyridoxine kinase family. As to quaternary structure, homodimer. Zn(2+) is required as a cofactor. It depends on Mg(2+) as a cofactor.

It is found in the cytoplasm. The protein resides in the cytosol. The catalysed reaction is pyridoxal + ATP = pyridoxal 5'-phosphate + ADP + H(+). It carries out the reaction pyridoxamine + ATP = pyridoxamine 5'-phosphate + ADP + H(+). The enzyme catalyses pyridoxine + ATP = pyridoxine 5'-phosphate + ADP + H(+). The protein operates within cofactor metabolism; pyridoxal 5'-phosphate salvage; pyridoxal 5'-phosphate from pyridoxal: step 1/1. It participates in cofactor metabolism; pyridoxal 5'-phosphate salvage; pyridoxine 5'-phosphate from pyridoxine: step 1/1. Its pathway is cofactor metabolism; pyridoxal 5'-phosphate salvage; pyridoxamine 5'-phosphate from pyridoxamine: step 1/1. With respect to regulation, activity is increased in the presence of K(+)or Na(+). In terms of biological role, catalyzes the phosphorylation of the dietary vitamin B6 vitamers pyridoxal (PL), pyridoxine (PN) and pyridoxamine (PM) to form pyridoxal 5'-phosphate (PLP), pyridoxine 5'-phosphate (PNP) and pyridoxamine 5'-phosphate (PMP), respectively. PLP is the active form of vitamin B6, and acts as a cofactor for over 140 different enzymatic reactions. The sequence is that of Pyridoxal kinase (Pdxk) from Rattus norvegicus (Rat).